The primary structure comprises 343 residues: Probable transcription factor MYB58 (343 aa).

Positions Met-1–Arg-30 are disordered. A compositionally biased stretch (gly residues) spans Arg-15 to Glu-27. 2 HTH myb-type domains span residues Gly-26–Leu-78 and Arg-79–Ala-134. DNA-binding regions (H-T-H motif) lie at residues Trp-54–Lys-77 and Trp-107–Gln-130. Disordered stretches follow at residues Leu-137–Phe-169, Pro-219–Leu-238, and Asp-307–Leu-343. Polar residues predominate over residues Pro-157–Phe-169. The segment covering Gln-320–Ser-336 has biased composition (pro residues).

It localises to the nucleus. In terms of biological role, probable transcription factor. This is Probable transcription factor MYB58 from Oryza sativa subsp. japonica (Rice).